The primary structure comprises 1117 residues: Guanylate cyclase D (1117 aa).

The first 66 residues, 1–66, serve as a signal peptide directing secretion; the sequence is MAGLQQGCHF…ADSLSLLAWA (66 aa). Topologically, residues 67-479 are extracellular; that stretch reads RETFTLGVLG…CIRGVQPLGS (413 aa). Residues Cys-121 and Cys-149 are joined by a disulfide bond. A helical transmembrane segment spans residues 480–500; it reads LLTLTIACVLALVGGFLAYFI. Topologically, residues 501 to 1117 are cytoplasmic; sequence RLGLQQLRLL…RKSGEAGPGP (617 aa). The interval 529–557 is disordered; that stretch reads TPSRRRPHVDSGSESRSVVDGGSPRSVTQ. The region spanning 541–812 is the Protein kinase domain; the sequence is SESRSVVDGG…PSLDQIYTQF (272 aa). Positions 874–915 are interaction with NCALD; the sequence is MGTTVEPEYFDQVTIYFSDIVGFTTISALSEPIEVVGFLNDL. One can recognise a Guanylate cyclase domain in the interval 887-1017; it reads TIYFSDIVGF…DTVNTASRME (131 aa). The disordered stretch occupies residues 1096-1117; sequence GFAKARQGLAEPRKSGEAGPGP.

It belongs to the adenylyl cyclase class-4/guanylyl cyclase family. In terms of assembly, interacts (via the catalytic domain) with NCALD. Found in a subset of olfactory neurons in the main olfactory epithelium.

It is found in the cell projection. The protein localises to the cilium membrane. It catalyses the reaction GTP = 3',5'-cyclic GMP + diphosphate. With respect to regulation, activated by Ca(2+). Functionally, functions as an olfactory receptor activated by urine odorants, uroguanylin and guanylin and as well by the volatile semiochemicals carbon disulfide (CS2) and carbon dioxide (CO2). Has guanylate cyclase activity upon binding of the ligand. Activation of GUCY2D neurons leads to the cGMP-dependent activation of the CNGA3 channels, membrane depolarization and an increase in action potential frequency. Signaling pathways activated by GUCY2D may trigger social behaviors such as acquisition of food preference. This chain is Guanylate cyclase D, found in Mus musculus (Mouse).